The chain runs to 343 residues: Probable beta-1,3-galactosyltransferase 13 (343 aa).

Residues 22 to 42 (LIVFTSLAIGLTGFLFGLSTI) traverse the membrane as a helical; Signal-anchor for type II membrane protein segment. Residue Asn-265 is glycosylated (N-linked (GlcNAc...) asparagine).

Belongs to the glycosyltransferase 31 family. The cofactor is Mn(2+).

It is found in the golgi apparatus membrane. The protein operates within protein modification; protein glycosylation. In terms of biological role, beta-1,3-galactosyltransferase that transfers galactose from UDP-galactose to substrates with a terminal glycosyl residue. This is Probable beta-1,3-galactosyltransferase 13 (B3GALT13) from Arabidopsis thaliana (Mouse-ear cress).